Here is a 90-residue protein sequence, read N- to C-terminus: Probable oxaloacetate decarboxylase gamma chain 2 (90 aa).

Residues 10–32 (GINLLTLGMGFVFIFLIFLVYAT) traverse the membrane as a helical segment.

Belongs to the OadG family. In terms of assembly, heterotrimer of an alpha, a beta and a gamma subunit. The cofactor is Na(+).

The protein localises to the cell membrane. It carries out the reaction oxaloacetate + 2 Na(+)(in) + H(+) = pyruvate + 2 Na(+)(out) + CO2. In terms of biological role, catalyzes the decarboxylation of oxaloacetate coupled to Na(+) translocation. The protein is Probable oxaloacetate decarboxylase gamma chain 2 (oadG2) of Vibrio cholerae serotype O1 (strain ATCC 39315 / El Tor Inaba N16961).